Reading from the N-terminus, the 304-residue chain is Putative ankyrin repeat protein R602 (304 aa).

6 ANK repeats span residues leucine 82–phenylalanine 117, asparagine 118–alanine 146, aspartate 147–cysteine 176, aspartate 178–alanine 206, glycine 207–aspartate 236, and serine 238–threonine 266.

This Acanthamoeba polyphaga (Amoeba) protein is Putative ankyrin repeat protein R602.